Reading from the N-terminus, the 1929-residue chain is Myoferlin (1929 aa).

Residues 1–53 form a disordered region; sequence MISYEPPPSAISNPTDPGGTTIIQGDGENDEEEDRDIVDAGFNPSVPGAPGQT. Residues 27 to 36 are compositionally biased toward acidic residues; sequence GENDEEEDRD. 2 C2 domains span residues 62 to 179 and 218 to 354; these read VKGK…RKWV and EDDD…EEYD. The Ca(2+) site is built by Asp-267, Asp-275, Asp-323, Asp-325, and Asp-331. The span at 898–907 shows a compositional bias: basic residues; the sequence is RRLVRKRKKD. Residues 898-918 are disordered; sequence RRLVRKRKKDPKVSTTSKAAL. C2 domains follow at residues 996-1124, 1159-1283, 1408-1527, and 1645-1793; these read GANT…LLWY, RAPQ…TKHE, IPYP…SHCG, and GPPG…EKCS. Asp-1028, Asp-1034, Asp-1090, and Asp-1092 together coordinate Ca(2+). 7 residues coordinate Ca(2+): Asp-1442, Asp-1448, Asp-1497, Asp-1499, Asp-1764, Ser-1767, and Asp-1770. Residues 1845–1858 are compositionally biased toward basic and acidic residues; that stretch reads DAEERPAGKGRDEP. The tract at residues 1845–1867 is disordered; it reads DAEERPAGKGRDEPNMNPKLDPP. Residues 1894-1914 traverse the membrane as a helical segment; it reads WVFIGLIILLLVLLFLGVFFY.

This sequence belongs to the ferlin family. Ca(2+) serves as cofactor.

Its subcellular location is the cell membrane. The protein localises to the nucleus membrane. It localises to the cytoplasmic vesicle membrane. In terms of biological role, may play a role in membrane regeneration and repair. The polypeptide is Myoferlin (myof) (Xenopus tropicalis (Western clawed frog)).